Here is a 623-residue protein sequence, read N- to C-terminus: DNA-directed RNA polymerase III subunit rpc3 (623 aa).

3 disordered regions span residues 131 to 164, 249 to 282, and 381 to 412; these read RSDASKTNGVNEGEHDRPEGENETNGTNGEHVSD, RGVKRSQTNGVSDDNETEKARFDYDDGEDEDEEN, and SLGPTNTPANNRLGKRTFDDTVDDNDDDHGAT. Over residues 273–282 the composition is skewed to acidic residues; that stretch reads DDGEDEDEEN. The leucine-zipper stretch occupies residues 550-571; that stretch reads TYKAMSRCLQRLKFERGRLKDF.

It belongs to the RNA polymerase beta chain family. In terms of assembly, component of the RNA polymerase III (Pol III) complex consisting of 17 subunits.

It localises to the nucleus. In terms of biological role, DNA-dependent RNA polymerase catalyzes the transcription of DNA into RNA using the four ribonucleoside triphosphates as substrates. Specific core component of RNA polymerase III which synthesizes small RNAs, such as 5S rRNA and tRNAs. This Emericella nidulans (strain FGSC A4 / ATCC 38163 / CBS 112.46 / NRRL 194 / M139) (Aspergillus nidulans) protein is DNA-directed RNA polymerase III subunit rpc3 (rpc82).